Here is a 530-residue protein sequence, read N- to C-terminus: Cilia- and flagella-associated protein 97 (530 aa).

Residue Ser19 is modified to Phosphoserine. 2 disordered regions span residues 29–83 (TNSV…PVEN) and 116–258 (IPNR…LSTP). A compositionally biased stretch (basic and acidic residues) spans 35-49 (KQNDDPKERIDKDTK). Over residues 50–63 (NVNSNTGMQTTENY) the composition is skewed to polar residues. Over residues 67-82 (KGNERNVKFPPEHPVE) the composition is skewed to basic and acidic residues. Over residues 129–139 (GDYYTDGEESS) the composition is skewed to acidic residues. Phosphothreonine is present on Thr133. Ser138 and Ser139 each carry phosphoserine. A compositionally biased stretch (low complexity) spans 170–203 (SSSSSSSLSSSSSGSGTDCLDGGSDSHLSDSSPS). Ser215 bears the Phosphoserine mark. A compositionally biased stretch (polar residues) spans 227 to 236 (TETQPSSTTP). Phosphoserine occurs at positions 245 and 327. The stretch at 372-447 (KNYSFTREEV…ALLKRLEAVK (76 aa)) forms a coiled coil. Disordered stretches follow at residues 395–417 (LSRQ…HPPK) and 483–530 (QYSP…TAWL). Residues 491–501 (SRTSSATSGLS) are compositionally biased toward polar residues.

The protein belongs to the CFAP97 family.

This Pongo abelii (Sumatran orangutan) protein is Cilia- and flagella-associated protein 97.